The sequence spans 530 residues: Phosphoenolpyruvate carboxykinase (ATP) (530 aa).

Substrate contacts are provided by Arg-57, Tyr-193, and Lys-199. ATP contacts are provided by residues Lys-199, His-218, and 234–242; that span reads GLSGTGKTT. The Mn(2+) site is built by Lys-199 and His-218. Asp-255 is a binding site for Mn(2+). Positions 283, 320, and 445 each coordinate ATP. A substrate-binding site is contributed by Arg-320.

Belongs to the phosphoenolpyruvate carboxykinase (ATP) family. Mn(2+) serves as cofactor.

The protein resides in the cytoplasm. The catalysed reaction is oxaloacetate + ATP = phosphoenolpyruvate + ADP + CO2. It participates in carbohydrate biosynthesis; gluconeogenesis. Functionally, involved in the gluconeogenesis. Catalyzes the conversion of oxaloacetate (OAA) to phosphoenolpyruvate (PEP) through direct phosphoryl transfer between the nucleoside triphosphate and OAA. This chain is Phosphoenolpyruvate carboxykinase (ATP), found in Leptospira biflexa serovar Patoc (strain Patoc 1 / Ames).